A 1664-amino-acid polypeptide reads, in one-letter code: Cortactin-binding protein 2 (1664 aa).

Disordered regions lie at residues 1-23 (MATD…AGAA), 268-440 (QLKR…ALHP), 455-479 (GNAN…SPTS), and 495-618 (QALS…KPSI). The stretch at 119–276 (RKMQERMSTQ…EQLKRGSDSK (158 aa)) forms a coiled coil. 2 stretches are compositionally biased toward low complexity: residues 368–379 (SSAPTIPAASAS) and 395–407 (TSST…GTTP). At Arg499 the chain carries Asymmetric dimethylarginine. 6 ANK repeats span residues 710 to 740 (GRPT…DTNY), 744 to 773 (DGHS…QVNA), 777 to 806 (NGFT…DVNH), 810 to 839 (GGQT…DRSI), 843 to 872 (DGWT…PARG), and 913 to 943 (EGWT…EPEK). The disordered stretch occupies residues 871–900 (RGNSSNEEEPESGAFARDGGEESSEGTSEP). A disordered region spans residues 1447-1483 (SKKKGESGAWRKVSTSPRKKSGRFSSPIWNEPDLSPG). Position 1525 is a phosphoserine (Ser1525). The tract at residues 1558–1664 (RTFHSSGSNP…KHEQVEKPNT (107 aa)) is disordered. A compositionally biased stretch (polar residues) spans 1587–1600 (PLSSHQATECSTSK). Positions 1625 to 1639 (SQNTKRSSSSSNTRQ) are enriched in low complexity. Positions 1646 to 1664 (SKEENWNLHKHEQVEKPNT) are enriched in basic and acidic residues.

As to quaternary structure, interacts with CTTN/cortactin SH3 domain. Interacts with STRN, STRN4/zinedin and MOB4/phocein; this interactions mediate the association with the STRIPAK core complex and may regulate dendritic spine distribution of the STRIPAK complex in hippocampal neurons. Activation of glutamate receptors weakens the interaction with STRN and STRN4.

It is found in the cytoplasm. The protein resides in the cell cortex. The protein localises to the cell projection. It localises to the dendritic spine. In terms of biological role, regulates the dendritic spine distribution of CTTN/cortactin in hippocampal neurons, and thus controls dendritic spinogenesis and dendritic spine maintenance. Associates with the striatin-interacting phosphatase and kinase (STRIPAK) core complex to regulate dendritic spine distribution of the STRIPAK complex in hippocampal neurons. The protein is Cortactin-binding protein 2 (CTTNBP2) of Oryctolagus cuniculus (Rabbit).